Here is a 543-residue protein sequence, read N- to C-terminus: Chaperonin GroEL (543 aa).

ATP is bound by residues 29-32 (TLGP), 86-90 (DGTTT), Gly413, 478-480 (NAA), and Asp494.

Belongs to the chaperonin (HSP60) family. As to quaternary structure, forms a cylinder of 14 subunits composed of two heptameric rings stacked back-to-back. Interacts with the co-chaperonin GroES.

It is found in the cytoplasm. The catalysed reaction is ATP + H2O + a folded polypeptide = ADP + phosphate + an unfolded polypeptide.. Functionally, together with its co-chaperonin GroES, plays an essential role in assisting protein folding. The GroEL-GroES system forms a nano-cage that allows encapsulation of the non-native substrate proteins and provides a physical environment optimized to promote and accelerate protein folding. The protein is Chaperonin GroEL of Lactobacillus johnsonii (strain CNCM I-12250 / La1 / NCC 533).